The following is a 428-amino-acid chain: Enolase (428 aa).

Glutamine 163 is a (2R)-2-phosphoglycerate binding site. Glutamate 205 acts as the Proton donor in catalysis. Positions 242, 286, and 313 each coordinate Mg(2+). (2R)-2-phosphoglycerate-binding residues include lysine 338, arginine 367, serine 368, and lysine 389. The active-site Proton acceptor is lysine 338.

The protein belongs to the enolase family. Mg(2+) serves as cofactor.

The protein localises to the cytoplasm. It localises to the secreted. Its subcellular location is the cell surface. The enzyme catalyses (2R)-2-phosphoglycerate = phosphoenolpyruvate + H2O. The protein operates within carbohydrate degradation; glycolysis; pyruvate from D-glyceraldehyde 3-phosphate: step 4/5. In terms of biological role, catalyzes the reversible conversion of 2-phosphoglycerate (2-PG) into phosphoenolpyruvate (PEP). It is essential for the degradation of carbohydrates via glycolysis. The polypeptide is Enolase (Acidovorax ebreus (strain TPSY) (Diaphorobacter sp. (strain TPSY))).